The primary structure comprises 304 residues: Undecaprenyl-diphosphatase (304 aa).

8 consecutive transmembrane segments (helical) span residues 5-25 (FLFI…EFVP), 47-67 (GFPE…VVVL), 72-92 (ISSS…LKTS), 111-131 (FGIN…LFHD), 137-157 (LFST…LIVI), 209-231 (ISGL…AMVG), 248-268 (TNWI…LVVI), and 283-303 (FAIY…TKVI).

Belongs to the UppP family.

Its subcellular location is the cell membrane. It catalyses the reaction di-trans,octa-cis-undecaprenyl diphosphate + H2O = di-trans,octa-cis-undecaprenyl phosphate + phosphate + H(+). In terms of biological role, catalyzes the dephosphorylation of undecaprenyl diphosphate (UPP). Confers resistance to bacitracin. This is Undecaprenyl-diphosphatase from Clostridium perfringens (strain 13 / Type A).